The primary structure comprises 329 residues: DNA-directed RNA polymerase subunit alpha (329 aa).

Residues 1 to 235 (MQGSVTEFLK…EQLDAFVDLR (235 aa)) form an alpha N-terminal domain (alpha-NTD) region. Positions 249–329 (FDPILLRPVD…NWPPASIAED (81 aa)) are alpha C-terminal domain (alpha-CTD).

Belongs to the RNA polymerase alpha chain family. Homodimer. The RNAP catalytic core consists of 2 alpha, 1 beta, 1 beta' and 1 omega subunit. When a sigma factor is associated with the core the holoenzyme is formed, which can initiate transcription.

It carries out the reaction RNA(n) + a ribonucleoside 5'-triphosphate = RNA(n+1) + diphosphate. In terms of biological role, DNA-dependent RNA polymerase catalyzes the transcription of DNA into RNA using the four ribonucleoside triphosphates as substrates. The sequence is that of DNA-directed RNA polymerase subunit alpha from Mannheimia succiniciproducens (strain KCTC 0769BP / MBEL55E).